An 807-amino-acid chain; its full sequence is Nucleolar complex protein 3 homolog (807 aa).

2 disordered regions span residues 27-93 (KLKN…DMMD) and 167-191 (EKPV…EVIE). Residues 40–51 (KKYRKEQRKLRQ) are compositionally biased toward basic residues. Residues 52 to 78 (AVKDAVSKKPIPLEDPKSKRPVKRMER) show a composition bias toward basic and acidic residues. Acidic residues-rich tracts occupy residues 79–93 (EEDE…DMMD) and 174–190 (QQEE…EEVI). Lysine 332 participates in a covalent cross-link: Glycyl lysine isopeptide (Lys-Gly) (interchain with G-Cter in SUMO2). A coiled-coil region spans residues 449-489 (FKEKRKTLSRMQRKWKKAEEKLERELREAEASESTEKKLKL).

It belongs to the CBF/MAK21 family.

Its subcellular location is the nucleus. The protein localises to the nucleolus. The protein resides in the nucleus speckle. May be required for adipogenesis. The polypeptide is Nucleolar complex protein 3 homolog (Noc3l) (Mus musculus (Mouse)).